A 465-amino-acid polypeptide reads, in one-letter code: Alpha-2A adrenergic receptor (465 aa).

The Extracellular segment spans residues 1–48; the sequence is MFRQEQPLAEGSFAPMGSLQPDAGNSSWNGTEAPGGGTRATPYSLQVT. Residues N25 and N29 are each glycosylated (N-linked (GlcNAc...) asparagine). A helical membrane pass occupies residues 49 to 74; that stretch reads LTLVCLAGLLMLFTVFGNVLVIIAVF. Residues 75-85 lie on the Cytoplasmic side of the membrane; that stretch reads TSRALKAPQNL. The chain crosses the membrane as a helical span at residues 86-111; the sequence is FLVSLASADILVATLVIPFSLANEVM. Residues 112–121 are Extracellular-facing; the sequence is GYWYFGKVWC. C121 and C203 are disulfide-bonded. A helical membrane pass occupies residues 122–144; that stretch reads EIYLALDVLFCTSSIVHLCAISL. Over 145-164 the chain is Cytoplasmic; it reads DRYWSITQAIEYNLKRTPRR. The helical transmembrane segment at 165-188 threads the bilayer; that stretch reads IKAIIVTVWVISAVISFPPLISIE. Over 189–207 the chain is Extracellular; the sequence is KKGAGGGQQPAEPSCKIND. Residues 208 to 232 traverse the membrane as a helical segment; sequence QKWYVISSSIGSFFAPCLIMILVYV. Residues 233 to 389 lie on the Cytoplasmic side of the membrane; the sequence is RIYQIAKRRT…RQNREKRFTF (157 aa). The interval 242–377 is disordered; it reads TRVPPSRRGP…RAGGAKASRW (136 aa). Basic and acidic residues predominate over residues 313–330; it reads SSEHAERPQGPGKPERGP. A Phosphoserine modification is found at S346. Residues 353–364 show a composition bias toward gly residues; sequence GAAGPGASGSGQ. Position 368 is an omega-N-methylarginine (R368). The helical transmembrane segment at 390 to 414 threads the bilayer; that stretch reads VLAVVIGVFVVCWFPFFFTYTLIAV. The Extracellular portion of the chain corresponds to 415 to 424; the sequence is GCPVPYQLFN. The chain crosses the membrane as a helical span at residues 425–445; the sequence is FFFWFGYCNSSLNPVIYTIFN. The Cytoplasmic segment spans residues 446–465; sequence HDFRRAFKKILCRGDRKRIV. C457 carries S-palmitoyl cysteine lipidation.

Belongs to the G-protein coupled receptor 1 family. Adrenergic receptor subfamily. ADRA2A sub-subfamily. As to expression, expressed in brain.

It localises to the cell membrane. Alpha-2 adrenergic receptors mediate the catecholamine-induced inhibition of adenylate cyclase through the action of G proteins. This Rattus norvegicus (Rat) protein is Alpha-2A adrenergic receptor.